The following is a 366-amino-acid chain: Type 2A phosphatase-associated protein 42 (366 aa).

Residues 318 to 366 (RVLQGGEEPEQAPDEENMDWQDRETYKAREWDEFKESHAKGSGNTMNRG) are disordered. A compositionally biased stretch (acidic residues) spans 324–336 (EEPEQAPDEENMD). The segment covering 337-356 (WQDRETYKAREWDEFKESHA) has biased composition (basic and acidic residues).

This sequence belongs to the IGBP1/TAP42 family. As to quaternary structure, associates with the PP2a (PPH21 and PPH22) and SIT4 protein phosphatase catalytic subunits. Interacts with PPG1, PPH3 and TIP41. In terms of processing, phosphorylated by TOR kinases. Dephosphorylated by CDC55, TPD3 and SIT4.

Involved in negative regulation of the TOR signaling pathway in response to type of available nitrogen source. Inhibitor of PP2A phosphatase SIT4, which results in inhibition of nuclear export of MSN2, due to lack of dephosphorylation by SIT4. Also required for rapamycin induced activation of expression of many nitrogen discrimination pathway (NDP) genes. In complex with PPH21, required for organization of the actin cytoskeletom during the cell cycle via a Rho GTPase-dependent mechanism. The sequence is that of Type 2A phosphatase-associated protein 42 (TAP42) from Saccharomyces cerevisiae (strain ATCC 204508 / S288c) (Baker's yeast).